Here is a 537-residue protein sequence, read N- to C-terminus: Beta-1-syntrophin (537 aa).

At A2 the chain carries N-acetylalanine. 2 consecutive PH domains span residues 18-297 (RAQR…SNAG) and 321-432 (EIRH…QGCH). 3 positions are modified to phosphoserine: S86, S125, and S204. Positions 111–194 (GVKVLKQELG…EVLLEVKYMR (84 aa)) constitute a PDZ domain. The disordered stretch occupies residues 204 to 233 (SPVSEIGWETPPPESPRLGGGSAEPLSSQS). A Phosphothreonine modification is found at T213. S218, S225, S231, S235, and S388 each carry phosphoserine. The 57-residue stretch at 481–537 (PYEKLKMSSDDGIRMLYLDFGGKEGEIQLDLHSCPKPIVFIIHSFLSAKITRLGLVA) folds into the SU domain. The tract at residues 517–537 (PIVFIIHSFLSAKITRLGLVA) is calmodulin-binding.

This sequence belongs to the syntrophin family. As to quaternary structure, monomer and homodimer. Interacts with the viral HTLV-1 TAX protein and other members of the syntrophin family: SNTA1 and SNTB2. Interacts with the dystrophin protein DMD and related proteins DTNA and UTRN and with the sodium channel proteins SCN4A and SCN5A. Interacts with DTNB. Post-translationally, phosphorylated by CaM-kinase II. Ubiquitous. Expressed at high levels in the liver.

Its subcellular location is the cell membrane. The protein localises to the sarcolemma. It is found in the cell junction. The protein resides in the cytoplasm. It localises to the cytoskeleton. Adapter protein that binds to and probably organizes the subcellular localization of a variety of membrane proteins. May link various receptors to the actin cytoskeleton and the dystrophin glycoprotein complex. In Mus musculus (Mouse), this protein is Beta-1-syntrophin (Sntb1).